Consider the following 469-residue polypeptide: Glutamate--tRNA ligase (469 aa).

The short motif at proline 11 to asparagine 21 is the 'HIGH' region element. The span at glycine 118–proline 131 shows a compositional bias: basic and acidic residues. The disordered stretch occupies residues glycine 118–proline 138. A 'KMSKS' region motif is present at residues lysine 243–arginine 247. Residue lysine 246 participates in ATP binding.

It belongs to the class-I aminoacyl-tRNA synthetase family. Glutamate--tRNA ligase type 1 subfamily. As to quaternary structure, monomer.

It is found in the cytoplasm. It carries out the reaction tRNA(Glu) + L-glutamate + ATP = L-glutamyl-tRNA(Glu) + AMP + diphosphate. Functionally, catalyzes the attachment of glutamate to tRNA(Glu) in a two-step reaction: glutamate is first activated by ATP to form Glu-AMP and then transferred to the acceptor end of tRNA(Glu). The protein is Glutamate--tRNA ligase of Burkholderia vietnamiensis (strain G4 / LMG 22486) (Burkholderia cepacia (strain R1808)).